The sequence spans 352 residues: Fructose-1,6-bisphosphatase class 1 (352 aa).

Positions 111, 133, 135, and 136 each coordinate Mg(2+). Substrate contacts are provided by residues 136-139 (DGSS), asparagine 228, tyrosine 256, and lysine 286. Glutamate 292 is a binding site for Mg(2+).

It belongs to the FBPase class 1 family. As to quaternary structure, homotetramer. Mg(2+) serves as cofactor.

It localises to the cytoplasm. It carries out the reaction beta-D-fructose 1,6-bisphosphate + H2O = beta-D-fructose 6-phosphate + phosphate. Its pathway is carbohydrate biosynthesis; Calvin cycle. The sequence is that of Fructose-1,6-bisphosphatase class 1 from Crocosphaera subtropica (strain ATCC 51142 / BH68) (Cyanothece sp. (strain ATCC 51142)).